The following is a 1648-amino-acid chain: Putative 1-phosphatidylinositol-3-phosphate 5-kinase FAB1C (1648 aa).

The span at 97-106 (YDKVHPRDSP) shows a compositional bias: basic and acidic residues. Disordered stretches follow at residues 97 to 116 (YDKVHPRDSPDPPSSLATES), 241 to 276 (QEDHEEEEDKLQQPLDFENNGRIWYPPPPEDENDDA), 721 to 746 (SEIPETPTQQPSGEEDNGRGEEENQL), and 1083 to 1139 (KTGD…GTSL). Residues 1084–1130 (TGDDNAPRNPEMHDPPKIDRRMQEGSDERDEQSHTDSEANGDNKDPE) are compositionally biased toward basic and acidic residues. The region spanning 1316-1639 (NLNNRESEPS…RFRKAMTTYF (324 aa)) is the PIPK domain.

As to quaternary structure, component of the PI(3,5)P2 regulatory complex at least composed of ATG18, SAC/FIG4, FAB1 and VAC14. Mg(2+) serves as cofactor. Requires Mn(2+) as cofactor.

It carries out the reaction a 1,2-diacyl-sn-glycero-3-phospho-(1D-myo-inositol-3-phosphate) + ATP = a 1,2-diacyl-sn-glycero-3-phospho-(1D-myo-inositol-3,5-bisphosphate) + ADP + H(+). Its function is as follows. The PI(3,5)P2 regulatory complex regulates both the synthesis and turnover of phosphatidylinositol 3,5-bisphosphate (PtdIns(3,5)P2). Catalyzes the phosphorylation of phosphatidylinositol 3-phosphate on the fifth hydroxyl of the myo-inositol ring, to form phosphatidylinositol 3,5-bisphosphate. The polypeptide is Putative 1-phosphatidylinositol-3-phosphate 5-kinase FAB1C (FAB1C) (Arabidopsis thaliana (Mouse-ear cress)).